We begin with the raw amino-acid sequence, 540 residues long: 2,3-bisphosphoglycerate-independent phosphoglycerate mutase (540 aa).

Asp-13 and Ser-63 together coordinate Mn(2+). Ser-63 acts as the Phosphoserine intermediate in catalysis. Substrate-binding positions include His-124, 154 to 155, Arg-186, Arg-192, 262 to 265, and Lys-356; these read RD and RPDR. Mn(2+) contacts are provided by Asp-423, His-427, Asp-464, His-465, and His-483.

It belongs to the BPG-independent phosphoglycerate mutase family. As to quaternary structure, monomer. Mn(2+) is required as a cofactor.

It carries out the reaction (2R)-2-phosphoglycerate = (2R)-3-phosphoglycerate. It functions in the pathway carbohydrate degradation; glycolysis; pyruvate from D-glyceraldehyde 3-phosphate: step 3/5. Its function is as follows. Catalyzes the interconversion of 2-phosphoglycerate and 3-phosphoglycerate. The chain is 2,3-bisphosphoglycerate-independent phosphoglycerate mutase from Chloroflexus aggregans (strain MD-66 / DSM 9485).